Consider the following 396-residue polypeptide: Phospholipase A1-II 4 (396 aa).

The active-site Acyl-ester intermediate is Ser221. Catalysis depends on charge relay system residues Ser221, Asp282, and His319.

This sequence belongs to the AB hydrolase superfamily. Lipase family.

The protein resides in the cytoplasm. Acylhydrolase that catalyzes the hydrolysis of phospholipids at the sn-1 position. The protein is Phospholipase A1-II 4 of Oryza sativa subsp. japonica (Rice).